A 129-amino-acid chain; its full sequence is UPF0102 protein Ctha_1382 (129 aa).

Belongs to the UPF0102 family.

In Chloroherpeton thalassium (strain ATCC 35110 / GB-78), this protein is UPF0102 protein Ctha_1382.